We begin with the raw amino-acid sequence, 234 residues long: Iron-sulfur cluster co-chaperone protein HscB (234 aa).

4 residues coordinate a divalent metal cation: cysteine 40, cysteine 43, cysteine 57, and cysteine 60. One can recognise a J domain in the interval 71-143 (DYFSLMNCNR…LTRGLYLLKL (73 aa)).

This sequence belongs to the HscB family. As to quaternary structure, interacts with ISCU and HSPA9 to form an iron-sulfur transfer complex. Interacts with SDHAF1 (via the first LYR motif); the interaction recruits the iron-sulfur transfer complex composed of HSC20, HSPA9 and ISCU and mediates the incorporation of iron-sulfur clusters into SDHB which also interacts with HSC20. Interacts with the cytoplasmic form of ISCU and with CIA complex member CIAO1 (via LYR motif). Homodimer. Interacts with ISCU (cytoplasmic form); this interaction stabilizes the (Fe-S) clusters on ISCU. Interacts with the CIA complex member CIAO1 (via LYR motif).

The protein resides in the cytoplasm. It is found in the mitochondrion. The protein operates within cofactor biosynthesis; iron-sulfur cluster biosynthesis. Its function is as follows. Acts as a co-chaperone in iron-sulfur cluster assembly in mitochondria. Required for incorporation of iron-sulfur clusters into SDHB, the iron-sulfur protein subunit of succinate dehydrogenase that is involved in complex II of the mitochondrial electron transport chain. Recruited to SDHB by interaction with SDHAF1 which first binds SDHB and then recruits the iron-sulfur transfer complex formed by HSC20, HSPA9 and ISCU through direct binding to HSC20. Plays an essential role in hematopoiesis. Acts as a co-chaperone in iron-sulfur cluster assembly in the cytoplasm. Also mediates complex formation between components of the cytosolic iron-sulfur biogenesis pathway and the CIA targeting complex composed of CIAO1, DIPK1B/FAM69B and MMS19 by binding directly to the scaffold protein ISCU and to CIAO1. This facilitates iron-sulfur cluster insertion into a number of cytoplasmic and nuclear proteins including POLD1, ELP3, DPYD and PPAT. The polypeptide is Iron-sulfur cluster co-chaperone protein HscB (Mus musculus (Mouse)).